Reading from the N-terminus, the 97-residue chain is uncharacterized protein (97 aa).

This sequence belongs to the mycobacterial PE family.

Its function is as follows. Part of the ESX-1 / type VII specialized secretion system (T7SS), which exports several proteins including EsxA and EsxB. Plays a role in DNA conjugation, in at least a donor strain. This is an uncharacterized protein from Mycolicibacterium smegmatis (strain ATCC 700084 / mc(2)155) (Mycobacterium smegmatis).